Consider the following 451-residue polypeptide: Coproporphyrinogen III oxidase (451 aa).

FAD-binding positions include 10 to 15, 36 to 37, 58 to 61, Val242, Trp393, and 429 to 431; these read GGGISG, DP, GAEA, and IGV.

The protein belongs to the protoporphyrinogen/coproporphyrinogen oxidase family. Coproporphyrinogen III oxidase subfamily. It depends on FAD as a cofactor.

The protein resides in the cytoplasm. It catalyses the reaction coproporphyrinogen III + 3 O2 = coproporphyrin III + 3 H2O2. Its pathway is porphyrin-containing compound metabolism; protoheme biosynthesis. In terms of biological role, involved in coproporphyrin-dependent heme b biosynthesis. Catalyzes the oxidation of coproporphyrinogen III to coproporphyrin III. This Mycobacterium leprae (strain TN) protein is Coproporphyrinogen III oxidase.